The sequence spans 116 residues: Aspartate 1-decarboxylase (116 aa).

Serine 25 serves as the catalytic Schiff-base intermediate with substrate; via pyruvic acid. A Pyruvic acid (Ser) modification is found at serine 25. Threonine 57 lines the substrate pocket. The Proton donor role is filled by tyrosine 58. 73–75 (GAA) is a binding site for substrate.

It belongs to the PanD family. In terms of assembly, heterooctamer of four alpha and four beta subunits. Pyruvate is required as a cofactor. Post-translationally, is synthesized initially as an inactive proenzyme, which is activated by self-cleavage at a specific serine bond to produce a beta-subunit with a hydroxyl group at its C-terminus and an alpha-subunit with a pyruvoyl group at its N-terminus.

The protein resides in the cytoplasm. It carries out the reaction L-aspartate + H(+) = beta-alanine + CO2. It participates in cofactor biosynthesis; (R)-pantothenate biosynthesis; beta-alanine from L-aspartate: step 1/1. Its function is as follows. Catalyzes the pyruvoyl-dependent decarboxylation of aspartate to produce beta-alanine. The protein is Aspartate 1-decarboxylase of Phocaeicola vulgatus (strain ATCC 8482 / DSM 1447 / JCM 5826 / CCUG 4940 / NBRC 14291 / NCTC 11154) (Bacteroides vulgatus).